The chain runs to 346 residues: Ribosomal RNA small subunit methyltransferase H (346 aa).

S-adenosyl-L-methionine is bound by residues 47-49 (GGY), Asp65, Phe92, Asp113, and Gln120. Residues 270-279 (RGEAPSRRLP) are compositionally biased toward basic and acidic residues. The disordered stretch occupies residues 270–346 (RGEAPSRRLP…ALPQRAAKGR (77 aa)).

It belongs to the methyltransferase superfamily. RsmH family.

It localises to the cytoplasm. It catalyses the reaction cytidine(1402) in 16S rRNA + S-adenosyl-L-methionine = N(4)-methylcytidine(1402) in 16S rRNA + S-adenosyl-L-homocysteine + H(+). Specifically methylates the N4 position of cytidine in position 1402 (C1402) of 16S rRNA. This is Ribosomal RNA small subunit methyltransferase H from Methylocella silvestris (strain DSM 15510 / CIP 108128 / LMG 27833 / NCIMB 13906 / BL2).